The chain runs to 182 residues: Vacuolar protein sorting-associated protein 29 (182 aa).

Asp8, His10, and Asn39 together coordinate Zn(2+). An N6-acetyllysine modification is found at Lys50. 4 residues coordinate Zn(2+): Asp62, His86, His115, and His117.

It belongs to the VPS29 family. In terms of assembly, component of the commander complex consisting of the CCC subcomplex and the retriever subcomplex. Component of the heterotrimeric retriever complex formed by VPS26C, VPS29 and VPS35L; within the complex interacts with VPS35L. Component of the heterotrimeric retromer cargo-selective complex (CSC), also described as vacuolar protein sorting subcomplex (VPS), formed by VPS26 (VPS26A or VPS26B), VPS29 and VPS35. The CSC has a highly elongated structure with VPS26 and VPS29 binding independently at opposite distal ends of VPS35 as central platform. The CSC is believed to associate with variable sorting nexins to form functionally distinct retromer complex variants. The originally described retromer complex (also called SNX-BAR retromer) is a pentamer containing the CSC and a heterodimeric membrane-deforming subcomplex formed between SNX1 or SNX2 and SNX5 or SNX6 (also called SNX-BAR subcomplex); the respective CSC and SNX-BAR subcomplexes associate with low affinity. The CSC associates with SNX3 to form a SNX3-retromer complex. The CSC associates with SNX27, the WASH complex and the SNX-BAR subcomplex to form the SNX27-retromer complex. Interacts with VPS26A, VPS35, SNX1, SNX2, SNX3, SNX27, WASHC5. Interacts with TBC1D5; this interaction is blocked by VPS35L in the retriever complex. Interacts with SNX17; the interaction is indirect; SNX17 (via its C-terminus) interacts with the retriever complex (via VPS26C and VPS35L). Interacts with VPS26B and ANKRD27. As to quaternary structure, (Microbial infection) Interacts with human papillomavirus 16 minor capsid protein L2 (via C-terminus); this interaction mediates the transport of the capsid from the early endosome to the Golgi apparatus. Ubiquitous. Highly expressed in heart, lung, placenta, spleen, peripheral blood leukocytes, thymus, colon skeletal muscle, kidney and brain.

Its subcellular location is the cytoplasm. The protein resides in the membrane. It localises to the endosome membrane. The protein localises to the early endosome. It is found in the late endosome. Its function is as follows. Component of the commander complex that is essential for endosomal recycling of transmembrane cargos; the commander complex is composed of the CCC subcomplex and the retriever subcomplex. Component of the retriever complex, which is a heterotrimeric complex related to retromer cargo-selective complex (CSC) and essential for retromer-independent retrieval and recycling of numerous cargos such as integrin alpha-5/beta-1 (ITGA5:ITGB1). Component of the retromer cargo-selective complex (CSC). The CSC is believed to be the core functional component of retromer or respective retromer complex variants acting to prevent missorting of selected transmembrane cargo proteins into the lysosomal degradation pathway. The recruitment of the CSC to the endosomal membrane involves RAB7A and SNX3. The SNX-BAR retromer mediates retrograde transport of cargo proteins from endosomes to the trans-Golgi network (TGN) and is involved in endosome-to-plasma membrane transport for cargo protein recycling. The SNX3-retromer mediates the retrograde endosome-to-TGN transport of WLS distinct from the SNX-BAR retromer pathway. The SNX27-retromer is believed to be involved in endosome-to-plasma membrane trafficking and recycling of a broad spectrum of cargo proteins. The CSC seems to act as recruitment hub for other proteins, such as the WASH complex and TBC1D5. Required to regulate transcytosis of the polymeric immunoglobulin receptor (pIgR-pIgA). In the endosomes, retriever complex drives the retrieval and recycling of NxxY-motif-containing cargo proteins by coupling to SNX17, a cargo essential for the homeostatic maintenance of numerous cell surface proteins associated with processes that include cell migration, cell adhesion, nutrient supply and cell signaling. The recruitment of the retriever complex to the endosomal membrane involves CCC and WASH complexes. Involved in GLUT1 endosome-to-plasma membrane trafficking; the function is dependent of association with ANKRD27. Functionally, (Microbial infection) The heterotrimeric retromer cargo-selective complex (CSC) mediates the exit of human papillomavirus from the early endosome and the delivery to the Golgi apparatus. The protein is Vacuolar protein sorting-associated protein 29 of Homo sapiens (Human).